The chain runs to 65 residues: uncharacterized protein (65 aa).

The next 2 helical transmembrane spans lie at 4–24 and 45–65; these read TIWLALALVLVLEGLGPMLYP and FGGGLVVAGVVVYYMLRKTIG.

The protein resides in the cell membrane. This is an uncharacterized protein from Escherichia coli O157:H7.